A 504-amino-acid chain; its full sequence is Beta-glucosidase 24 (504 aa).

The N-terminal stretch at 1–18 (MELLWLLLLLLMASSTSS) is a signal peptide. Glutamine 47 contributes to the a beta-D-glucoside binding site. Asparagine 75 carries N-linked (GlcNAc...) asparagine glycosylation. A beta-D-glucoside-binding positions include histidine 151 and 196-197 (NE). Catalysis depends on glutamate 197, which acts as the Proton donor. Cysteine 216 and cysteine 224 are joined by a disulfide. The N-linked (GlcNAc...) asparagine glycan is linked to asparagine 329. Tyrosine 340 lines the a beta-D-glucoside pocket. Asparagine 371 is a glycosylation site (N-linked (GlcNAc...) asparagine). Glutamate 411 serves as a coordination point for a beta-D-glucoside. Glutamate 411 (nucleophile) is an active-site residue. Asparagine 421 is a glycosylation site (N-linked (GlcNAc...) asparagine). A beta-D-glucoside is bound by residues tryptophan 460, 467–468 (EW), and phenylalanine 476.

The protein belongs to the glycosyl hydrolase 1 family.

It carries out the reaction Hydrolysis of terminal, non-reducing beta-D-glucosyl residues with release of beta-D-glucose.. This chain is Beta-glucosidase 24 (BGLU24), found in Oryza sativa subsp. japonica (Rice).